A 330-amino-acid chain; its full sequence is Aspartate--ammonia ligase (330 aa).

The protein belongs to the class-II aminoacyl-tRNA synthetase family. AsnA subfamily.

The protein localises to the cytoplasm. It catalyses the reaction L-aspartate + NH4(+) + ATP = L-asparagine + AMP + diphosphate + H(+). It participates in amino-acid biosynthesis; L-asparagine biosynthesis; L-asparagine from L-aspartate (ammonia route): step 1/1. This Histophilus somni (strain 2336) (Haemophilus somnus) protein is Aspartate--ammonia ligase.